We begin with the raw amino-acid sequence, 846 residues long: Enhancer of polycomb-like protein 1 (846 aa).

Disordered regions lie at residues 169–204 (FNSK…KGDA), 391–466 (TSDE…APDA), 587–607 (EKKR…QSPK), 682–702 (AADA…PQPN), and 759–804 (QVQA…GVKQ). The span at 180 to 203 (VKSDKEQGRGMRVKGKDREKEKGD) shows a compositional bias: basic and acidic residues. Positions 411 to 426 (PSLSGQTPLTSGQSSS) are enriched in polar residues. Basic and acidic residues predominate over residues 432–452 (TDKDREERAQRERYDAQRNAE). Residues 434 to 490 (KDREERAQRERYDAQRNAERSGILSGRSNAPDALKERLQALQQKTEEMLARKKEQDA) adopt a coiled-coil conformation. The segment covering 686 to 702 (KPPPAPIFQKPPAPQPN) has biased composition (pro residues). Low complexity predominate over residues 759–773 (QVQAQGQGHPQAHLQ). Over residues 783–796 (NGVNSPMPNGQQML) the composition is skewed to polar residues.

Belongs to the enhancer of polycomb family. As to quaternary structure, component of the NuA4 histone acetyltransferase complex.

It is found in the nucleus. In terms of biological role, component of the NuA4 histone acetyltransferase complex which is involved in transcriptional activation of selected genes principally by acetylation of nucleosomal histone H4 and H2A. The NuA4 complex is also involved in DNA repair. Involved in gene silencing by neighboring heterochromatin, blockage of the silencing spreading along the chromosome, and required for cell cycle progression through G2/M. This Cryptococcus neoformans var. neoformans serotype D (strain JEC21 / ATCC MYA-565) (Filobasidiella neoformans) protein is Enhancer of polycomb-like protein 1 (EPL1).